We begin with the raw amino-acid sequence, 789 residues long: DNA topoisomerase 4 subunit A (789 aa).

The Topo IIA-type catalytic domain maps to 34–499 (LPDLRDGLKP…EKQKVQDSDF (466 aa)). Catalysis depends on Y122, which acts as the O-(5'-phospho-DNA)-tyrosine intermediate.

This sequence belongs to the type II topoisomerase GyrA/ParC subunit family. ParC type 2 subfamily. Heterotetramer composed of ParC and ParE.

Its subcellular location is the cell membrane. It carries out the reaction ATP-dependent breakage, passage and rejoining of double-stranded DNA.. Its function is as follows. Topoisomerase IV is essential for chromosome segregation. It relaxes supercoiled DNA. Performs the decatenation events required during the replication of a circular DNA molecule. The chain is DNA topoisomerase 4 subunit A from Mycoplasma pneumoniae (strain ATCC 29342 / M129 / Subtype 1) (Mycoplasmoides pneumoniae).